The chain runs to 362 residues: HLA class I histocompatibility antigen, B alpha chain (362 aa).

A signal peptide spans 1-24 (MLVMAPRTVLLLLSAALALTETWA). Positions 3–11 (VMAPRTVLL) are VL9 epitope. The alpha-1 stretch occupies residues 25–114 (GSHSMRYFYT…LRGYYNQSEA (90 aa)). The Extracellular portion of the chain corresponds to 25-309 (GSHSMRYFYT…PSSQSTVPIV (285 aa)). Asn87 is an a peptide antigen binding site. The Bw6 motif signature appears at 101-107 (SLRNLRG). A peptide antigen is bound at residue Tyr108. A glycan (N-linked (GlcNAc...) asparagine) is linked at Asn110. The alpha-2 stretch occupies residues 115–206 (GSHTLQSMYG…ENGKDKLERA (92 aa)). A disulfide bond links Cys125 and Cys188. 5 residues coordinate a peptide antigen: Thr167, Lys170, Glu176, Tyr183, and Tyr195. The alpha-3 stretch occupies residues 207–298 (DPPKTHVTHH…GLPKPLTLRW (92 aa)). Positions 209 to 295 (PKTHVTHHPI…QHEGLPKPLT (87 aa)) constitute an Ig-like C1-type domain. The cysteines at positions 227 and 283 are disulfide-linked. A connecting peptide region spans residues 299-309 (EPSSQSTVPIV). The chain crosses the membrane as a helical span at residues 310–333 (GIVAGLAVLAVVVIGAVVAAVMCR). Residues 334–362 (RKSSGGKGGSYSQAACSDSAQGSDVSLTA) lie on the Cytoplasmic side of the membrane. Residues 337–362 (SGGKGGSYSQAACSDSAQGSDVSLTA) are disordered. The segment covering 346–362 (QAACSDSAQGSDVSLTA) has biased composition (polar residues).

In terms of assembly, heterotrimer that consists of an alpha chain HLA-B, a beta chain B2M and a peptide (peptide-HLA-B-B2M). Early in biogenesis, HLA-B-B2M dimer interacts with the components of the peptide-loading complex composed of TAPBP, TAP1-TAP2, TAPBPL, PDIA3/ERP57 and CALR. Interacts with TAP1-TAP2 transporter via TAPBP; this interaction is obligatory for the loading of peptide epitopes delivered to the ER by TAP1-TAP2 transporter. Interacts with TAPBPL; TAPBPL binds peptide-free HLA-B-B2M complexes or those loaded with low affinity peptides, likely facilitating peptide exchange for higher affinity peptides. Only optimally assembled peptide-HLA-B-B2M trimer translocates to the surface of antigen-presenting cells, where it interacts with TCR and CD8 coreceptor on the surface of T cells. HLA-B (via polymorphic alpha-1 and alpha-2 domains) interacts with antigen-specific TCR (via CDR1, CDR2 and CDR3 domains). One HLA-B molecule (mainly via nonpolymorphic alpha-3 domain) interacts with one CD8A homodimer (via CDR-like loop); this interaction ensures peptide-HLA-B-B2M recognition by CD8-positive T cells only. Allele B*57:01 interacts (via Bw4 motif) with KIR3DL1 (via Ig-like C2-type domain); this interaction may interfere with peptide binding. Allele B*46:01 interacts with KIR2DL3. (Microbial infection) Interacts with HTLV-1 accessory protein p12I.

The protein localises to the cell membrane. It localises to the endoplasmic reticulum membrane. Antigen-presenting major histocompatibility complex class I (MHCI) molecule. In complex with B2M/beta 2 microglobulin displays primarily viral and tumor-derived peptides on antigen-presenting cells for recognition by alpha-beta T cell receptor (TCR) on HLA-B-restricted CD8-positive T cells, guiding antigen-specific T cell immune response to eliminate infected or transformed cells. May also present self-peptides derived from the signal sequence of secreted or membrane proteins, although T cells specific for these peptides are usually inactivated to prevent autoreactivity. Both the peptide and the MHC molecule are recognized by TCR, the peptide is responsible for the fine specificity of antigen recognition and MHC residues account for the MHC restriction of T cells. Typically presents intracellular peptide antigens of 8 to 13 amino acids that arise from cytosolic proteolysis via constitutive proteasome and IFNG-induced immunoproteasome. Can bind different peptides containing allele-specific binding motifs, which are mainly defined by anchor residues at position 2 and 9. Its function is as follows. Allele B*07:02: Displays peptides sharing a common signature motif, namely a Pro residue at position 2 and mainly a Leu anchor residue at the C-terminus. Presents a long peptide (APRGPHGGAASGL) derived from the cancer-testis antigen CTAG1A/NY-ESO-1, eliciting a polyclonal CD8-positive T cell response against tumor cells. Presents viral epitopes derived from HIV-1 gag-pol (TPQDLNTML) and Nef (RPQVPLRPM). Presents an immunodominant epitope derived from SARS-CoV-2 N/nucleoprotein (SPRWYFYYL). Displays self-peptides including a peptide derived from the signal sequence of HLA-DPB1 (APRTVALTA). Functionally, allele B*08:01: Presents to CD8-positive T cells viral epitopes derived from EBV/HHV-4 EBNA3 (QAKWRLQTL), eliciting cytotoxic T cell response. In terms of biological role, allele B*13:02: Presents multiple HIV-1 epitopes derived from gag (RQANFLGKI, GQMREPRGSDI), nef (RQDILDLWI), gag-pol (RQYDQILIE, GQGQWTYQI) and rev (LQLPPLERL), all having in common a Gln residue at position 2 and mainly hydrophobic amino acids Leu, Ile or Val at the C-terminus. Associated with successful control of HIV-1 infection. Allele B*18:01: Preferentially presents octomeric and nonameric peptides sharing a common motif, namely a Glu at position 2 and Phe or Tyr anchor residues at the C-terminus. Presents an EBV/HHV-4 epitope derived from BZLF1 (SELEIKRY). May present to CD8-positive T cells an antigenic peptide derived from MAGEA3 (MEVDPIGHLY), triggering an anti-tumor immune response. May display a broad repertoire of self-peptides with a preference for peptides derived from RNA-binding proteins. Its function is as follows. Allele B*27:05: Presents to CD8-positive T cells immunodominant viral epitopes derived from HCV POLG (ARMILMTHF), HIV-1 gag (KRWIILGLNK), IAV NP (SRYWAIRTR), SARS-CoV-2 N/nucleoprotein (QRNAPRITF), EBV/HHV-4 EBNA4 (HRCQAIRKK) and EBV/HHV-4 EBNA6 (RRIYDLIEL), conferring longterm protection against viral infection. Can present self-peptides derived from cytosolic and nuclear proteins. All peptides carry an Arg at position 2. The peptide-bound form interacts with NK cell inhibitory receptor KIR3DL1 and inhibits NK cell activation in a peptide-specific way, being particularly sensitive to the nature of the amino acid side chain at position 8 of the antigenic peptide. KIR3DL1 fails to recognize HLA-B*27:05 in complex with B2M and EBV/HHV-4 EBNA6 (RRIYDLIEL) peptide, which can lead to increased activation of NK cells during infection. May present an altered repertoire of peptides in the absence of TAP1-TAP2 and TAPBPL. Functionally, allele B*40:01: Presents immunodominant viral epitopes derived from EBV/HHV-4 LMP2 (IEDPPFNSL) and SARS-CoV-2 N/nucleoprotein (MEVTPSGTWL), triggering memory CD8-positive T cell response. Displays self-peptides sharing a signature motif, namely a Glu at position 2 and a Leu anchor residue at the C-terminus. In terms of biological role, allele B*41:01: Displays self-peptides sharing a signature motif, namely a Glu at position 2 and Ala or Pro anchor residues at the C-terminus. Allele B*44:02: Presents immunodominant viral epitopes derived from EBV/HHV-4 EBNA4 (VEITPYKPTW) and EBNA6 (AEGGVGWRHW, EENLLDFVRF), triggering memory CD8-positive T cell response. Displays self-peptides sharing a signature motif, namely a Glu at position 2 and Phe, Tyr or Trp anchor residues at the C-terminus. Its function is as follows. Allele B*45:01: Displays self-peptides sharing a signature motif, namely a Glu at position 2 and Ala or Pro anchor residues at the C-terminus. Functionally, allele B*46:01: Preferentially presents nonameric peptides sharing a signature motif, namely Ala and Leu at position 2 and Tyr, Phe, Leu, or Met anchor residues at the C-terminus. The peptide-bound form interacts with KIR2DL3 and inhibits NK cell cytotoxic response in a peptide-specific way. In terms of biological role, allele B*47:01: Displays self-peptides sharing a signature motif, namely an Asp at position 2 and Leu or Met anchor residues at the C-terminus. Allele B*49:01: Displays self-peptides sharing a signature motif, namely a Glu at position 2 and Ile or Val anchor residues at the C-terminus. Its function is as follows. Allele B*50:01: Displays self-peptides sharing a signature motif, namely a Glu at position 2 and Ala or Pro anchor residues at the C-terminus. Functionally, allele B*51:01: Presents an octomeric HIV-1 epitope derived from gag-pol (TAFTIPSI) to the public TRAV17/TRBV7-3 TCR clonotype, strongly suppressing HIV-1 replication. In terms of biological role, allele B*54:01: Displays peptides sharing a common signature motif, namely a Pro residue at position 2 and Ala anchor residue at the C-terminus. Allele B*55:01: Displays peptides sharing a common signature motif, namely a Pro residue at position 2 and Ala anchor residue at the C-terminus. Its function is as follows. Allele B*56:01: Displays peptides sharing a common signature motif, namely a Pro residue at position 2 and Ala anchor residue at the C-terminus. Functionally, allele B*57:01: The peptide-bound form recognizes KIR3DL1 and inhibits NK cell cytotoxic response. Presents HIV gag peptides (immunodominant KAFSPEVIPMF and subdominant KALGPAATL epitopes) predominantly to CD8-positive T cell clones expressing a TRAV41-containing TCR, triggering HLA-B-restricted T cell responses. In terms of biological role, allele B*67:01: Displays peptides sharing a common signature motif, namely a Pro residue at position 2 and Leu anchor residue at the C-terminus. This is HLA class I histocompatibility antigen, B alpha chain from Homo sapiens (Human).